The following is a 1758-amino-acid chain: Condensin-2 complex subunit hcp-6 (1758 aa).

4 disordered regions span residues 428–501 (DPGA…KAKE), 969–1008 (ENGS…KGGM), 1379–1460 (QKRL…ARLL), and 1500–1656 (SKQA…LSRG). Residues 438-462 (EQNEEEDEEEEGEDEEEEEENEQDD) show a composition bias toward acidic residues. The span at 463-473 (VAVKEEEQSDK) shows a compositional bias: basic and acidic residues. A compositionally biased stretch (acidic residues) spans 474–484 (SDEENDGDNEE). Basic and acidic residues predominate over residues 485-501 (NVSKKKEEKKKEKKAKE). The segment covering 969-979 (ENGSSDASTVN) has biased composition (polar residues). Residues 999–1008 (SSQKSSKGGM) are compositionally biased toward low complexity. Positions 1326–1385 (CIEHKNDIDEILQDNRQLKDEMMFELQRVKQRTEEANRILDEYLKRVAEFKKQQKRLSKS) form a coiled coil. Positions 1414–1423 (EDQENVEEEV) are enriched in acidic residues. Composition is skewed to basic and acidic residues over residues 1424–1437 (EMRT…DADV) and 1500–1512 (SKQA…KTIV). Composition is skewed to polar residues over residues 1602-1618 (ISAN…QSTE) and 1640-1651 (VPTSSSGNTEND).

In terms of assembly, component of the condensin-2 complex.

It is found in the nucleus. The protein resides in the chromosome. Its subcellular location is the centromere. In terms of biological role, chromosomal protein which is recruited to mitotic chromosomes by hcp-3 (CENP-A) and hcp-4 (CENP-C). Involved in chromosome segregation during mitosis, playing a role in chromosome condensation and in maintaining chromosome morphology, rigidity and orientation during mitosis. The chain is Condensin-2 complex subunit hcp-6 from Caenorhabditis elegans.